A 351-amino-acid chain; its full sequence is Glycerol-1-phosphate dehydrogenase [NAD(P)+] (351 aa).

Residues 97-101 and 119-122 contribute to the NAD(+) site; these read GKVID and TSPS. Aspartate 124 contacts substrate. Serine 128 serves as a coordination point for NAD(+). Aspartate 171 serves as a coordination point for substrate. Residues aspartate 171 and histidine 251 each contribute to the Zn(2+) site. Residue histidine 255 coordinates substrate. Histidine 267 provides a ligand contact to Zn(2+).

Belongs to the glycerol-1-phosphate dehydrogenase family. As to quaternary structure, homodimer. Zn(2+) is required as a cofactor.

Its subcellular location is the cytoplasm. It carries out the reaction sn-glycerol 1-phosphate + NAD(+) = dihydroxyacetone phosphate + NADH + H(+). The catalysed reaction is sn-glycerol 1-phosphate + NADP(+) = dihydroxyacetone phosphate + NADPH + H(+). It functions in the pathway membrane lipid metabolism; glycerophospholipid metabolism. Functionally, catalyzes the NAD(P)H-dependent reduction of dihydroxyacetonephosphate (DHAP or glycerone phosphate) to glycerol 1-phosphate (G1P). The G1P thus generated is used as the glycerophosphate backbone of phospholipids in the cellular membranes of Archaea. The chain is Glycerol-1-phosphate dehydrogenase [NAD(P)+] from Saccharolobus islandicus (strain M.16.27) (Sulfolobus islandicus).